A 198-amino-acid polypeptide reads, in one-letter code: Putative nitroreductase MJ1384 (198 aa).

Belongs to the nitroreductase family. The cofactor is FMN.

The polypeptide is Putative nitroreductase MJ1384 (Methanocaldococcus jannaschii (strain ATCC 43067 / DSM 2661 / JAL-1 / JCM 10045 / NBRC 100440) (Methanococcus jannaschii)).